Reading from the N-terminus, the 211-residue chain is Small ribosomal subunit protein uS3 (211 aa).

The region spanning 16–85 (IDEYFKTKLV…NPQIEVKQVE (70 aa)) is the KH type-2 domain.

The protein belongs to the universal ribosomal protein uS3 family. As to quaternary structure, part of the 30S ribosomal subunit.

In terms of biological role, binds the lower part of the 30S subunit head. This Methanococcus maripaludis (strain C7 / ATCC BAA-1331) protein is Small ribosomal subunit protein uS3.